The primary structure comprises 69 residues: U-Asilidin(12)-Dg3b (69 aa).

Positions 1–19 are cleaved as a signal peptide; sequence MRFLNIFLFFAVMIAFVSA. Positions 20-33 are excised as a propeptide; it reads SPVLEEEEIDIEPR. 3 cysteine pairs are disulfide-bonded: Cys-36–Cys-59, Cys-45–Cys-65, and Cys-49–Cys-67.

Belongs to the asilidin-12 family. As to expression, expressed by the venom gland.

The protein localises to the secreted. Its function is as follows. The recombinant peptide moderately increases Kv11.1/KCNH2/ERG1 currents and shifts the voltage-dependence of the channel activation to hyperpolarised potentials. In vivo, induces neurotoxic effects when injected into insects (tested on L.cuprina and A.domesticus). In Dolopus genitalis (Giant Australian assassin fly), this protein is U-Asilidin(12)-Dg3b.